Consider the following 65-residue polypeptide: Large ribosomal subunit protein bL35 (65 aa).

The tract at residues 1-26 (MPKIKTVRGAAKRFKKTASGGFKRKQ) is disordered. The span at 10-26 (AAKRFKKTASGGFKRKQ) shows a compositional bias: basic residues.

Belongs to the bacterial ribosomal protein bL35 family.

The protein is Large ribosomal subunit protein bL35 of Mannheimia succiniciproducens (strain KCTC 0769BP / MBEL55E).